The sequence spans 147 residues: UPF0251 protein CTC_01373 (147 aa).

The protein belongs to the UPF0251 family.

In Clostridium tetani (strain Massachusetts / E88), this protein is UPF0251 protein CTC_01373.